We begin with the raw amino-acid sequence, 406 residues long: Probable G-protein coupled receptor tkr-1 (406 aa).

Residues 1–47 (MNQEFLIQLGERACKNAENLTLPAELEGIFFCAPSSRESLATQVFVA) lie on the Extracellular side of the membrane. The helical transmembrane segment at 48 to 68 (IAFVLLMATAIIGNSVVMWII) threads the bilayer. The Cytoplasmic segment spans residues 69-76 (YQHKVMHY). The helical transmembrane segment at 77 to 97 (GFNYFLFNMAFADLLIALFNV) threads the bilayer. The Extracellular portion of the chain corresponds to 98-115 (GTSWTYNLYYDWWYGDLC). Residues 116–136 (TLTSFFGIAPTTVSVCSMMAL) form a helical membrane-spanning segment. The Cytoplasmic portion of the chain corresponds to 137–158 (SWDRCQAVVNPLQKRPLSRKRS). A helical transmembrane segment spans residues 159 to 179 (VIAILIIWVVSTVTALPFAIA). Topologically, residues 180-204 (ASVNSLYTYDVVTSTVSKAHVCSAP) are extracellular. The helical transmembrane segment at 205-225 (VNTFFEKVLFGIQYALPIIIL) threads the bilayer. Residues 226-261 (GSTFTRIAVAFRATNEATDSSLKNNHTRAKSKAVKM) lie on the Cytoplasmic side of the membrane. A helical membrane pass occupies residues 262–282 (LFLMVVAFVVCWLPYHIYHAF). The Extracellular portion of the chain corresponds to 283-297 (ALEEFFDAARGKYAY). The chain crosses the membrane as a helical span at residues 298–318 (LLIYWIAMSSCAYNPIIYCFA). Residues 319-406 (NERFRIGFRY…KVHLLSCHER (88 aa)) are Cytoplasmic-facing.

This sequence belongs to the G-protein coupled receptor 1 family.

The protein localises to the cell membrane. In terms of biological role, not known. Putative receptor. The chain is Probable G-protein coupled receptor tkr-1 (tkr-1) from Caenorhabditis elegans.